The chain runs to 231 residues: MIITVDGPSGAGKGTLCYALAEKLGYALLDSGAIYRVTALAALQRKTDLTNETDLAELARHLDIQFIPQNGEVSILLAGMDVSRLIRTQEVADAASKVAVFQKVRSALLQLQQDFAKNDGLIADGRDMGTVVFPNAQVKLFLDASAEERAKRRYKQLQNKGINGNFAQILAEIKERDFRDRNREVAPLKPADDALLLDSTTLSIDEVIDQALAYIQRXGISFRFNCLFKEE.

7–15 (GPSGAGKGT) lines the ATP pocket.

This sequence belongs to the cytidylate kinase family. Type 1 subfamily.

The protein localises to the cytoplasm. The catalysed reaction is CMP + ATP = CDP + ADP. It catalyses the reaction dCMP + ATP = dCDP + ADP. This Haemophilus influenzae (strain ATCC 51907 / DSM 11121 / KW20 / Rd) protein is Cytidylate kinase 1.